An 816-amino-acid polypeptide reads, in one-letter code: Lon protease (816 aa).

In terms of domain architecture, Lon N-terminal spans 27–221; sequence LPLLPIRDVV…KVNDLLAREH (195 aa). An ATP-binding site is contributed by 372 to 379; the sequence is GPPGVGKT. One can recognise a Lon proteolytic domain in the interval 608–789; it reads KNEVGVVNGL…DEVLKLALEK (182 aa). Catalysis depends on residues Ser-695 and Lys-738. Positions 795-816 are disordered; the sequence is PKGKAKPATPKVVVRPSKEISA. Residues 800-809 show a composition bias toward low complexity; that stretch reads KPATPKVVVR.

This sequence belongs to the peptidase S16 family. As to quaternary structure, homohexamer. Organized in a ring with a central cavity.

Its subcellular location is the cytoplasm. The enzyme catalyses Hydrolysis of proteins in presence of ATP.. Functionally, ATP-dependent serine protease that mediates the selective degradation of mutant and abnormal proteins as well as certain short-lived regulatory proteins. Required for cellular homeostasis and for survival from DNA damage and developmental changes induced by stress. Degrades polypeptides processively to yield small peptide fragments that are 5 to 10 amino acids long. Binds to DNA in a double-stranded, site-specific manner. The chain is Lon protease from Trichlorobacter lovleyi (strain ATCC BAA-1151 / DSM 17278 / SZ) (Geobacter lovleyi).